A 144-amino-acid polypeptide reads, in one-letter code: Catabolic 3-dehydroquinase 1 (144 aa).

The active-site Proton acceptor is the tyrosine 24. 3 residues coordinate substrate: asparagine 75, histidine 81, and aspartate 88. Residue histidine 101 is the Proton donor of the active site. Substrate-binding positions include 102-103 and arginine 112; that span reads IS.

Belongs to the type-II 3-dehydroquinase family. In terms of assembly, homododecamer. Adopts a ring-like structure, composed of an arrangement of two hexameric rings stacked on top of one another.

The enzyme catalyses 3-dehydroquinate = 3-dehydroshikimate + H2O. It functions in the pathway aromatic compound metabolism; 3,4-dihydroxybenzoate biosynthesis; 3,4-dihydroxybenzoate from 3-dehydroquinate: step 1/2. Is involved in the catabolism of quinate. Allows the utilization of quinate as carbon source via the beta-ketoadipate pathway. In Fusarium vanettenii (strain ATCC MYA-4622 / CBS 123669 / FGSC 9596 / NRRL 45880 / 77-13-4) (Fusarium solani subsp. pisi), this protein is Catabolic 3-dehydroquinase 1.